Reading from the N-terminus, the 190-residue chain is Potassium-transporting ATPase KdpC subunit (190 aa).

Residues 13–33 (IGFLLLTLVCGVLYPGVVTVF) form a helical membrane-spanning segment.

Belongs to the KdpC family. In terms of assembly, the system is composed of three essential subunits: KdpA, KdpB and KdpC.

It is found in the cell membrane. Part of the high-affinity ATP-driven potassium transport (or Kdp) system, which catalyzes the hydrolysis of ATP coupled with the electrogenic transport of potassium into the cytoplasm. This subunit acts as a catalytic chaperone that increases the ATP-binding affinity of the ATP-hydrolyzing subunit KdpB by the formation of a transient KdpB/KdpC/ATP ternary complex. In Listeria monocytogenes serovar 1/2a (strain ATCC BAA-679 / EGD-e), this protein is Potassium-transporting ATPase KdpC subunit.